Consider the following 264-residue polypeptide: MRKFLLKPKKSLGQNFILSNEIIKRIVALAGSLKDFNVIEIGPGYGALTREILAYNPKFLLSIEKDSSLVKHHEQLLNEHQGKYRIIEADALNVVEKELVECPVKVIANLPYNISVALFLKWLNNIKFFTNLTLMFQKEVAERITAEPNSKDYGSLSVLSQLLCDIKKEFDIEPKEFFPRPKVYSSVITVKPLPTPRFAVNLETLTKLTRAVFAQRRKMLRNSLQSITSDVSTTLENAKLSGDERPESLTIEQFCLLANNIIMR.

The S-adenosyl-L-methionine site is built by asparagine 15, isoleucine 17, glycine 42, glutamate 64, aspartate 90, and asparagine 109.

This sequence belongs to the class I-like SAM-binding methyltransferase superfamily. rRNA adenine N(6)-methyltransferase family. RsmA subfamily.

It is found in the cytoplasm. It catalyses the reaction adenosine(1518)/adenosine(1519) in 16S rRNA + 4 S-adenosyl-L-methionine = N(6)-dimethyladenosine(1518)/N(6)-dimethyladenosine(1519) in 16S rRNA + 4 S-adenosyl-L-homocysteine + 4 H(+). Functionally, specifically dimethylates two adjacent adenosines (A1518 and A1519) in the loop of a conserved hairpin near the 3'-end of 16S rRNA in the 30S particle. May play a critical role in biogenesis of 30S subunits. The protein is Ribosomal RNA small subunit methyltransferase A of Wolbachia pipientis subsp. Culex pipiens (strain wPip).